A 270-amino-acid polypeptide reads, in one-letter code: Formamidopyrimidine-DNA glycosylase (270 aa).

Residue P2 is the Schiff-base intermediate with DNA of the active site. The Proton donor role is filled by E3. K58 functions as the Proton donor; for beta-elimination activity in the catalytic mechanism. The DNA site is built by H91, R110, and R151. The segment at 236 to 270 adopts an FPG-type zinc-finger fold; it reads FVYGRGGEFCKVCGSTLREIRLGQRASVYCPRCQR. R260 serves as the catalytic Proton donor; for delta-elimination activity.

The protein belongs to the FPG family. As to quaternary structure, monomer. Zn(2+) is required as a cofactor.

It carries out the reaction Hydrolysis of DNA containing ring-opened 7-methylguanine residues, releasing 2,6-diamino-4-hydroxy-5-(N-methyl)formamidopyrimidine.. It catalyses the reaction 2'-deoxyribonucleotide-(2'-deoxyribose 5'-phosphate)-2'-deoxyribonucleotide-DNA = a 3'-end 2'-deoxyribonucleotide-(2,3-dehydro-2,3-deoxyribose 5'-phosphate)-DNA + a 5'-end 5'-phospho-2'-deoxyribonucleoside-DNA + H(+). In terms of biological role, involved in base excision repair of DNA damaged by oxidation or by mutagenic agents. Acts as a DNA glycosylase that recognizes and removes damaged bases. Has a preference for oxidized purines, such as 7,8-dihydro-8-oxoguanine (8-oxoG). Has AP (apurinic/apyrimidinic) lyase activity and introduces nicks in the DNA strand. Cleaves the DNA backbone by beta-delta elimination to generate a single-strand break at the site of the removed base with both 3'- and 5'-phosphates. The sequence is that of Formamidopyrimidine-DNA glycosylase from Pseudomonas paraeruginosa (strain DSM 24068 / PA7) (Pseudomonas aeruginosa (strain PA7)).